Here is a 462-residue protein sequence, read N- to C-terminus: Chitinase-like mite allergen Der f 18.0101 (462 aa).

A signal peptide spans 1–25 (MTRFSLTVLAVLAACFGSNIRPNVA). Residues 29–378 (PKTVCYYESW…HAIQSNYYHG (350 aa)) form the GH18 domain. C33 and C58 are oxidised to a cystine. N338 carries an N-linked (GlcNAc...) asparagine glycan. The Chitin-binding type-2 domain maps to 404–462 (VFHCHEEGFFRDKTYCATYYECKKGDFGLEKTVHHCANHLQAFDEVSRTCIDHTKIPGC). An intrachain disulfide couples C439 to C453.

Belongs to the glycosyl hydrolase 18 family. Chitinase class II subfamily. Expressed in the upper digestive tract. Staining is observed in the ventriculus, and in very rare individuals, also in the intestine or esophagus. No expression in fecal pellets neither inside the rectum nor defecated outside of the body.

Its subcellular location is the secreted. Its function is as follows. Probably a non-catalytic chitinase-like protein, which binds to insoluble chitin and enhances the activity of the catalytic chitinases. Has weak chitin-binding activity. This Dermatophagoides farinae (American house dust mite) protein is Chitinase-like mite allergen Der f 18.0101.